An 869-amino-acid polypeptide reads, in one-letter code: Bifunctional uridylyltransferase/uridylyl-removing enzyme (869 aa).

Residues 1–332 form a uridylyltransferase region; that stretch reads MTATPADRPD…QFDGEAVPVQ (332 aa). Positions 333 to 691 are uridylyl-removing; it reads LDAGFSLRRG…RRAVPDNDAL (359 aa). An HD domain is found at 450–572; sequence VDQHTLMVLR…VGTRERLDYL (123 aa). 2 ACT domains span residues 692-771 and 798-869; these read EVFV…PSRR and RISL…LDPT.

It belongs to the GlnD family. Requires Mg(2+) as cofactor.

The catalysed reaction is [protein-PII]-L-tyrosine + UTP = [protein-PII]-uridylyl-L-tyrosine + diphosphate. It catalyses the reaction [protein-PII]-uridylyl-L-tyrosine + H2O = [protein-PII]-L-tyrosine + UMP + H(+). With respect to regulation, uridylyltransferase (UTase) activity is inhibited by glutamine, while glutamine activates uridylyl-removing (UR) activity. In terms of biological role, modifies, by uridylylation and deuridylylation, the PII regulatory proteins (GlnB and homologs), in response to the nitrogen status of the cell that GlnD senses through the glutamine level. Under low glutamine levels, catalyzes the conversion of the PII proteins and UTP to PII-UMP and PPi, while under higher glutamine levels, GlnD hydrolyzes PII-UMP to PII and UMP (deuridylylation). Thus, controls uridylylation state and activity of the PII proteins, and plays an important role in the regulation of nitrogen assimilation and metabolism. This is Bifunctional uridylyltransferase/uridylyl-removing enzyme from Xanthomonas campestris pv. campestris (strain 8004).